The following is a 163-amino-acid chain: 18 kDa protein (163 aa).

This Mus musculus (Mouse) protein is 18 kDa protein.